The primary structure comprises 329 residues: Acetyl-coenzyme A carboxylase carboxyl transferase subunit alpha (329 aa).

One can recognise a CoA carboxyltransferase C-terminal domain in the interval 40–294 (QLESLAARRR…RAALERHLGE (255 aa)).

It belongs to the AccA family. Acetyl-CoA carboxylase is a heterohexamer composed of biotin carboxyl carrier protein (AccB), biotin carboxylase (AccC) and two subunits each of ACCase subunit alpha (AccA) and ACCase subunit beta (AccD).

It is found in the cytoplasm. It carries out the reaction N(6)-carboxybiotinyl-L-lysyl-[protein] + acetyl-CoA = N(6)-biotinyl-L-lysyl-[protein] + malonyl-CoA. It functions in the pathway lipid metabolism; malonyl-CoA biosynthesis; malonyl-CoA from acetyl-CoA: step 1/1. Its function is as follows. Component of the acetyl coenzyme A carboxylase (ACC) complex. First, biotin carboxylase catalyzes the carboxylation of biotin on its carrier protein (BCCP) and then the CO(2) group is transferred by the carboxyltransferase to acetyl-CoA to form malonyl-CoA. In Parasynechococcus marenigrum (strain WH8102), this protein is Acetyl-coenzyme A carboxylase carboxyl transferase subunit alpha.